The following is a 177-amino-acid chain: MIDDDGYRPNVGIVICNRQGQVLWARRYGQNSWQFPQGGINAGETAEQAMYRELFEEVGLGRKDVKILASTRNWLRYKLPKRLVRWDTKPVCIGQKQRWFLLQLQCSEAEINMQRSNTPEFDGWRWVSYWYPVRQVVSFKRDVYRRVMKEFSSVVMSLQESVAQGGRSAPGYRRKRG.

A Nudix hydrolase domain is found at Gly-6–Lys-149. The Nudix box signature appears at Gly-38–Gly-59.

The protein belongs to the Nudix hydrolase family. RppH subfamily. A divalent metal cation serves as cofactor.

In terms of biological role, accelerates the degradation of transcripts by removing pyrophosphate from the 5'-end of triphosphorylated RNA, leading to a more labile monophosphorylated state that can stimulate subsequent ribonuclease cleavage. The protein is RNA pyrophosphohydrolase of Edwardsiella ictaluri (strain 93-146).